We begin with the raw amino-acid sequence, 969 residues long: RNA polymerase-associated protein RapA (969 aa).

In terms of domain architecture, Helicase ATP-binding spans 164–334 (EVGRRHAPRV…FARLRLLDAD (171 aa)). Residue 177 to 184 (DEVGLGKT) participates in ATP binding. Residues 280-283 (DEAH) carry the DEAH box motif. The Helicase C-terminal domain occupies 492 to 646 (RVNWLLEKVK…TCPTGRAVYD (155 aa)).

It belongs to the SNF2/RAD54 helicase family. RapA subfamily. As to quaternary structure, interacts with the RNAP. Has a higher affinity for the core RNAP than for the holoenzyme. Its ATPase activity is stimulated by binding to RNAP.

Functionally, transcription regulator that activates transcription by stimulating RNA polymerase (RNAP) recycling in case of stress conditions such as supercoiled DNA or high salt concentrations. Probably acts by releasing the RNAP, when it is trapped or immobilized on tightly supercoiled DNA. Does not activate transcription on linear DNA. Probably not involved in DNA repair. This Vibrio cholerae serotype O1 (strain ATCC 39315 / El Tor Inaba N16961) protein is RNA polymerase-associated protein RapA.